A 128-amino-acid chain; its full sequence is uncharacterized protein (128 aa).

This is an uncharacterized protein from Botryotinia fuckeliana (Noble rot fungus).